The sequence spans 393 residues: NAD(P)H-quinone oxidoreductase subunit H, chloroplastic (393 aa).

It belongs to the complex I 49 kDa subunit family. In terms of assembly, NDH is composed of at least 16 different subunits, 5 of which are encoded in the nucleus.

It localises to the plastid. Its subcellular location is the chloroplast thylakoid membrane. The catalysed reaction is a plastoquinone + NADH + (n+1) H(+)(in) = a plastoquinol + NAD(+) + n H(+)(out). The enzyme catalyses a plastoquinone + NADPH + (n+1) H(+)(in) = a plastoquinol + NADP(+) + n H(+)(out). NDH shuttles electrons from NAD(P)H:plastoquinone, via FMN and iron-sulfur (Fe-S) centers, to quinones in the photosynthetic chain and possibly in a chloroplast respiratory chain. The immediate electron acceptor for the enzyme in this species is believed to be plastoquinone. Couples the redox reaction to proton translocation, and thus conserves the redox energy in a proton gradient. The chain is NAD(P)H-quinone oxidoreductase subunit H, chloroplastic from Ranunculus macranthus (Large buttercup).